Reading from the N-terminus, the 191-residue chain is UPF0312 protein Sputcn32_2702 (191 aa).

The N-terminal stretch at 1–22 (MKKQLLSALIGVSLLAPMAASA) is a signal peptide.

Belongs to the UPF0312 family. Type 1 subfamily.

The protein resides in the periplasm. This is UPF0312 protein Sputcn32_2702 from Shewanella putrefaciens (strain CN-32 / ATCC BAA-453).